The following is a 170-amino-acid chain: Cathelicidin antimicrobial peptide (170 aa).

An N-terminal signal peptide occupies residues Met1–Ala30. The propeptide at Gln31–Arg131 is cathelin-like domain (CLD). Intrachain disulfides connect Cys86–Cys97 and Cys108–Cys125. Residues Phe150–Arg162 are active core.

The protein belongs to the cathelicidin family. Monomer, homodimer or homotrimer (in vitro). Oligomerizes as tetra- or hexamer in solution (in vitro). In terms of processing, the N-terminus is blocked. Proteolytically cleaved by proteinase PRTN3 into antibacterial peptide LL-37. Proteolytically cleaved by cathepsin CTSG and neutrophil elastase ELANE. Post-translationally, resistant to proteolytic degradation in solution, and when bound to both zwitterionic (mimicking mammalian membranes) and negatively charged membranes (mimicking bacterial membranes). In terms of processing, after secretion onto the skin surface, the CAMP gene product is processed by a serine protease-dependent mechanism into multiple novel antimicrobial peptides distinct from and shorter than cathelicidin LL-37, such as peptides KR-20 (residues 151-170), LL-23 (residues 134-156), LL-29 (residues 134-162), KS-30 (residues 141-170), RK-31 (residues 140-170) and FF-33 (residues 138-170). The peptides act synergistically, killing bacteria at lower concentrations when present together, and maintain activity at increased salt condition. As to expression, expressed in neutrophilic granulocytes (at protein level). Expressed in bone marrow. In terms of tissue distribution, expressed in granulocytes (at protein level). Expressed by the eccrine apparatus and secreted into sweat on skin (at protein level). Expressed in bone marrow and testis.

It is found in the secreted. Its subcellular location is the vesicle. Its function is as follows. Antimicrobial protein that is an integral component of the innate immune system. Binds to bacterial lipopolysaccharides (LPS). Acts via neutrophil N-formyl peptide receptors to enhance the release of CXCL2. Postsecretory processing generates multiple cathelicidin antimicrobial peptides with various lengths which act as a topical antimicrobial defense in sweat on skin. The unprocessed precursor form, cathelicidin antimicrobial peptide, inhibits the growth of Gram-negative E.coli and E.aerogenes with efficiencies comparable to that of the mature peptide LL-37 (in vitro). In terms of biological role, antimicrobial peptide that is an integral component of the innate immune system. Binds to bacterial lipopolysaccharides (LPS). Causes membrane permeabilization by forming transmembrane pores (in vitro). Causes lysis of E.coli. Exhibits antimicrobial activity against Gram-negative bacteria such as P.aeruginosa, S.typhimurium, E.aerogenes, E.coli and P.syringae, Gram-positive bacteria such as L.monocytogenes, S.epidermidis, S.pyogenes and S.aureus, as well as vancomycin-resistant enterococci (in vitro). Exhibits antimicrobial activity against methicillin-resistant S.aureus, P.mirabilis, and C.albicans in low-salt media, but not in media containing 100 mM NaCl (in vitro). Forms chiral supramolecular assemblies with quinolone signal (PQS) molecules of P.aeruginosa, which may lead to interference of bacterial quorum signaling and perturbance of bacterial biofilm formation. May form supramolecular fiber-like assemblies on bacterial membranes. Induces cytokine and chemokine production as well as TNF/TNFA and CSF2/GMCSF production in normal human keratinocytes. Exhibits hemolytic activity against red blood cells. Exhibits antimicrobial activity against E.coli and B.megaterium (in vitro). Functionally, acts synergistically with peptides KS-30 and KR-31, killing bacteria such as S.aureus, E.coli and C.albicans at lower concentrations when present together, and maintains activity at increased salt condition. Does not have the ability to stimulate CXCL8/IL8 release from keratinocytes. Its function is as follows. Poorly active (MIC &gt; 150 uM) against E.coli strain K12. Is able to induce the pro-inflammatory cytokine TNF/TNFA or the chemokine CCL2/MCP1. In terms of biological role, moderately antibacterial. Moderately antibacterial. Acts synergistically with peptides KR-20 and KR-31, killing bacteria such as S.aureus, E.coli and C.albicans at lower concentrations when present together, and maintain activity at increased salt condition. Does not have the ability to stimulate CXCL8/IL8 release from keratinocytes. Functionally, acts synergistically with peptides KS-30 and KR-31, killing bacteria such as S.aureus, E.coli and C.albicans at lower concentrations when present together, and maintain activity at increased salt condition. Does not have the ability to stimulate CXCL8/IL8 release from keratinocytes. Its function is as follows. Inhibits the growth of E.coli and B.megaterium and exhibits hemolytic activity against human red blood cells. The chain is Cathelicidin antimicrobial peptide from Homo sapiens (Human).